The sequence spans 523 residues: UDP-glucuronosyltransferase 3A1 (523 aa).

Residues 1–22 (MAGQQALLLFGFILPGLLFSEA) form the signal peptide. Residues 23-483 (AKILTVSLVG…HAFQQPWYEQ (461 aa)) are Extracellular-facing. An N-linked (GlcNAc...) asparagine glycan is attached at Asn-52. Residues 484–504 (YLLDVFLFLLVVTLGTMWLCG) traverse the membrane as a helical segment. Residues 505–523 (KLLGLVARWLCGARKLKKA) lie on the Cytoplasmic side of the membrane.

It belongs to the UDP-glycosyltransferase family.

Its subcellular location is the membrane. It catalyses the reaction glucuronate acceptor + UDP-alpha-D-glucuronate = acceptor beta-D-glucuronoside + UDP + H(+). Functionally, UDP-glucuronosyltransferases catalyze phase II biotransformation reactions in which lipophilic substrates are conjugated with glucuronic acid to increase water solubility and enhance excretion. They are of major importance in the conjugation and subsequent elimination of potentially toxic xenobiotics and endogenous compounds. The protein is UDP-glucuronosyltransferase 3A1 (UGT3A1) of Bos taurus (Bovine).